A 451-amino-acid polypeptide reads, in one-letter code: Runt-related transcription factor 1 (451 aa).

The disordered stretch occupies residues 1 to 37; it reads MRIPVDASTSRRFTPPSTALSPGKMSEALPLGAPDGG. The segment covering 7-20 has biased composition (polar residues); sequence ASTSRRFTPPSTAL. Threonine 14 carries the post-translational modification Phosphothreonine. Serine 21 is modified (phosphoserine). Lysine 24 and lysine 43 each carry N6-acetyllysine. The region spanning 50 to 178 is the Runt domain; sequence SMVEVLADHP…TVDGPREPRR (129 aa). An interaction with DNA region spans residues 80 to 84; that stretch reads RCNKT. Chloride is bound by residues asparagine 112, glutamate 116, arginine 139, and valine 170. Interaction with DNA regions lie at residues 135–143 and 168–177; these read RFVGRSGRG and ITVDGPREPR. Disordered stretches follow at residues 170–195 and 209–252; these read VDGP…LSFS and MRVS…SPPW. 2 positions are modified to phosphoserine: serine 193 and serine 212. Polar residues predominate over residues 222-247; that stretch reads PRASLNHSTAFNPQPQSQMQDARQIQ. At serine 249 the chain carries Phosphoserine; by HIPK2. Phosphoserine occurs at positions 266 and 268. Residues 268–290 form a disordered region; sequence SVHPATPISPGRASGMTSLSAEL. Threonine 273 bears the Phosphothreonine; by HIPK2 mark. Serine 276 bears the Phosphoserine; by HIPK2 mark. The segment at 291 to 370 is interaction with KAT6A; the sequence is SSRLSTAPDL…SQAQAGPFQT (80 aa). The residue at position 296 (threonine 296) is a Phosphothreonine. The interval 307–399 is interaction with KAT6B; that stretch reads RQFPTLPSIS…MVGGERSPPR (93 aa). Positions 361–401 are interaction with FOXP3; it reads SQAQAGPFQTGSPSYHLYYGASAGSYQFSMVGGERSPPRIL. The interval 406–451 is disordered; the sequence is NASTGAALLNPSLPSQSDVVETEGSHSNSPTNMPPARLEEAVWRPY. Over residues 417-436 the composition is skewed to polar residues; that stretch reads SLPSQSDVVETEGSHSNSPT. Serine 434 bears the Phosphoserine mark. Residues 442–451 are compositionally biased toward basic and acidic residues; it reads RLEEAVWRPY.

Heterodimer with CBFB. RUNX1 binds DNA as a monomer and through the Runt domain. DNA-binding is increased by heterodimerization. Interacts with TLE1 and ALYREF/THOC4. Interacts with HIPK2, ELF1, ELF2 and SPI1. Interacts via its Runt domain with the ELF4 N-terminal region. Interaction with ELF2 isoform 2 (NERF-1a) may act to repress RUNX1-mediated transactivation. Interacts with KAT6A and KAT6B. Interacts with SUV39H1, leading to abrogation of transactivating and DNA-binding properties of RUNX1. Interacts with YAP1. Interaction with CDK6 prevents myeloid differentiation, reducing its transcription transactivation activity. Found in a complex with PRMT5, RUNX1 and CBFB. Interacts with FOXP3. Interacts with TBX21. Interacts with DPF2. Phosphorylated in its C-terminus upon IL-6 treatment. Phosphorylation enhances interaction with KAT6A. Post-translationally, methylated. In terms of processing, phosphorylated in Ser-249 Thr-273 and Ser-276 by HIPK2 when associated with CBFB and DNA. This phosphorylation promotes subsequent EP300 phosphorylation. As to expression, isoform 4 is expressed at high levels in thymus, spleen and T-cell lines and at lower levels in myeloid cell lines and nonhematopoietic cells. Isoform 5 is expressed ubiquitously in lumbar vertebrae, brain, kidney, heart, muscle, ovary and osteoblast-like cell line MC3T3-E1.

It is found in the nucleus. In terms of biological role, forms the heterodimeric complex core-binding factor (CBF) with CBFB. RUNX members modulate the transcription of their target genes through recognizing the core consensus binding sequence 5'-TGTGGT-3', or very rarely, 5'-TGCGGT-3', within their regulatory regions via their runt domain, while CBFB is a non-DNA-binding regulatory subunit that allosterically enhances the sequence-specific DNA-binding capacity of RUNX. The heterodimers bind to the core site of a number of enhancers and promoters, including murine leukemia virus, polyomavirus enhancer, T-cell receptor enhancers, LCK, IL3 and GM-CSF promoters. Essential for the development of normal hematopoiesis. Acts synergistically with ELF4 to transactivate the IL-3 promoter and with ELF2 to transactivate the BLK promoter. Inhibits KAT6B-dependent transcriptional activation. Involved in lineage commitment of immature T cell precursors. CBF complexes repress ZBTB7B transcription factor during cytotoxic (CD8+) T cell development. They bind to RUNX-binding sequence within the ZBTB7B locus acting as transcriptional silencer and allowing for cytotoxic T cell differentiation. CBF complexes binding to the transcriptional silencer is essential for recruitment of nuclear protein complexes that catalyze epigenetic modifications to establish epigenetic ZBTB7B silencing. Controls the anergy and suppressive function of regulatory T-cells (Treg) by associating with FOXP3. Activates the expression of IL2 and IFNG and down-regulates the expression of TNFRSF18, IL2RA and CTLA4, in conventional T-cells. Positively regulates the expression of RORC in T-helper 17 cells. Functionally, isoform 4 shows higher binding activities for target genes and binds TCR-beta-E2 and RAG-1 target site with threefold higher affinity than other isoforms. It is less effective in the context of neutrophil terminal differentiation. The chain is Runt-related transcription factor 1 (Runx1) from Mus musculus (Mouse).